The sequence spans 99 residues: MSRVCELTGKAVLTGNNVSHANNKTKRRFLPNLCQVTLISDALNQRYRLRVSAAALRSVEHRGGLDAFLLKASENELSMRARLLRRQIVKKTAEAAVAA.

It belongs to the bacterial ribosomal protein bL28 family.

The polypeptide is Large ribosomal subunit protein bL28 (Rhizobium etli (strain CIAT 652)).